Here is a 1954-residue protein sequence, read N- to C-terminus: Protein GREB1 (1954 aa).

Disordered stretches follow at residues 48 to 83 (LSSL…QLPP), 238 to 342 (LAAF…AKHE), and 1083 to 1235 (KGPK…GSSS). Residues 59 to 68 (NEEEEEDGEG) show a composition bias toward acidic residues. Positions 292–303 (SSLSALPRPSAL) are enriched in low complexity. 2 stretches are compositionally biased toward basic and acidic residues: residues 1083–1099 (KGPK…KLSS) and 1122–1133 (GPVKRERSHSHD). Low complexity predominate over residues 1134–1146 (SASSSLSSRASGS). Residues 1187–1196 (RVSQGSTVIS) show a composition bias toward polar residues. Residues 1224-1235 (SSQLSSSSGSSS) show a composition bias toward low complexity. A helical transmembrane segment spans residues 1873-1893 (DMVFSGLLLYLCDSFVGASFL).

Belongs to the GREB1 family.

It localises to the membrane. May play a role in estrogen-stimulated cell proliferation. The sequence is that of Protein GREB1 (Greb1) from Mus musculus (Mouse).